The following is a 372-amino-acid chain: Transcription factor MYB80 (372 aa).

HTH myb-type domains follow at residues 9-65 (KDNV…RPDL) and 66-116 (KHGE…KKKL). 2 DNA-binding regions (H-T-H motif) span residues 37-61 (WRLIPKNAGLQRCGKSCRLRWTNYL) and 89-112 (WSVIAAQLPGRTDNDVKNHWNTKL). Residues 298 to 311 (MWSHQSLYSGSSGT) are compositionally biased toward polar residues. A disordered region spans residues 298 to 347 (MWSHQSLYSGSSGTEEARRELPEKGNDSVGSSGGDDDAADDGKDSGKGAA). Basic and acidic residues predominate over residues 312–323 (EEARRELPEKGN).

The protein localises to the nucleus. Functionally, essential for tapetum development in anthers and microsporogenesis. May regulate the timing of tapetal programmed cell death (PCD) which is critical for pollen development. The polypeptide is Transcription factor MYB80 (Oryza sativa subsp. japonica (Rice)).